Here is a 347-residue protein sequence, read N- to C-terminus: Fructose-1,6-bisphosphatase (347 aa).

Residues 19–23 (ILQEQ) and 44–48 (SGELS) each bind AMP. Mg(2+)-binding residues include aspartate 85 and glutamate 114. 127-128 (SY) contacts AMP. Mg(2+) is bound by residues aspartate 133, isoleucine 135, and aspartate 136. Residue 136–139 (DGSS) participates in substrate binding. Lysine 155 lines the AMP pocket. Residues 227–230 (NEGY), 258–263 (RYIGSM), tyrosine 279, and 288–290 (KLR) contribute to the substrate site. Glutamate 294 is a binding site for Mg(2+).

This sequence belongs to the FBPase class 1 family. In terms of assembly, homotetramer. The cofactor is Mg(2+).

It catalyses the reaction beta-D-fructose 1,6-bisphosphate + H2O = beta-D-fructose 6-phosphate + phosphate. The protein operates within carbohydrate biosynthesis; gluconeogenesis. With respect to regulation, subject to complex allosteric regulation. The enzyme can assume an active R-state, or an inactive T-state. Intermediate conformations may exist. AMP acts as allosteric inhibitor. AMP binding affects the turnover of bound substrate and not the affinity for substrate. The sequence is that of Fructose-1,6-bisphosphatase (fbp1) from Schizosaccharomyces pombe (strain 972 / ATCC 24843) (Fission yeast).